The sequence spans 286 residues: Pyridoxal kinase PdxY (286 aa).

Substrate contacts are provided by residues Ser9 and Thr44–Gln45. Positions 111, 148, and 181 each coordinate ATP. Position 222 (Asp222) interacts with substrate.

Belongs to the pyridoxine kinase family. PdxY subfamily. Homodimer. Mg(2+) is required as a cofactor.

It catalyses the reaction pyridoxal + ATP = pyridoxal 5'-phosphate + ADP + H(+). The protein operates within cofactor metabolism; pyridoxal 5'-phosphate salvage; pyridoxal 5'-phosphate from pyridoxal: step 1/1. In terms of biological role, pyridoxal kinase involved in the salvage pathway of pyridoxal 5'-phosphate (PLP). Catalyzes the phosphorylation of pyridoxal to PLP. In Actinobacillus pleuropneumoniae serotype 5b (strain L20), this protein is Pyridoxal kinase PdxY.